Consider the following 923-residue polypeptide: RNA polymerase-associated protein RapA (923 aa).

Residues 162 to 332 (EVGNRVNPRV…FARLRLLDPE (171 aa)) form the Helicase ATP-binding domain. Residue 175-182 (DEVGLGKT) participates in ATP binding. A DEAH box motif is present at residues 278–281 (DEAH). Positions 443-597 (KIDWLIDFLK…TCPMGMALFS (155 aa)) constitute a Helicase C-terminal domain.

It belongs to the SNF2/RAD54 helicase family. RapA subfamily. In terms of assembly, interacts with the RNAP. Has a higher affinity for the core RNAP than for the holoenzyme. Its ATPase activity is stimulated by binding to RNAP.

Transcription regulator that activates transcription by stimulating RNA polymerase (RNAP) recycling in case of stress conditions such as supercoiled DNA or high salt concentrations. Probably acts by releasing the RNAP, when it is trapped or immobilized on tightly supercoiled DNA. Does not activate transcription on linear DNA. Probably not involved in DNA repair. The sequence is that of RNA polymerase-associated protein RapA from Haemophilus influenzae (strain ATCC 51907 / DSM 11121 / KW20 / Rd).